The sequence spans 182 residues: Isopentenyl-diphosphate Delta-isomerase (182 aa).

The Mn(2+) site is built by histidine 25 and histidine 32. Positions 30–164 constitute a Nudix hydrolase domain; that stretch reads RLHLAFSSWL…PWAFSPWMVM (135 aa). The active site involves cysteine 67. A Mg(2+)-binding site is contributed by cysteine 67. Histidine 69 lines the Mn(2+) pocket. Glutamate 87 contacts Mg(2+). The Mn(2+) site is built by glutamate 114 and glutamate 116. Glutamate 116 is an active-site residue.

This sequence belongs to the IPP isomerase type 1 family. As to quaternary structure, homodimer. Requires Mg(2+) as cofactor. Mn(2+) serves as cofactor.

The protein resides in the cytoplasm. The catalysed reaction is isopentenyl diphosphate = dimethylallyl diphosphate. Its pathway is isoprenoid biosynthesis; dimethylallyl diphosphate biosynthesis; dimethylallyl diphosphate from isopentenyl diphosphate: step 1/1. In terms of biological role, catalyzes the 1,3-allylic rearrangement of the homoallylic substrate isopentenyl (IPP) to its highly electrophilic allylic isomer, dimethylallyl diphosphate (DMAPP). The protein is Isopentenyl-diphosphate Delta-isomerase of Shigella dysenteriae serotype 1 (strain Sd197).